We begin with the raw amino-acid sequence, 364 residues long: Dual-specificity RNA methyltransferase RlmN (364 aa).

The Proton acceptor role is filled by E91. Residues 97–333 (ESDRGTLCIS…VTVRKTRGDD (237 aa)) enclose the Radical SAM core domain. An intrachain disulfide couples C104 to C338. [4Fe-4S] cluster-binding residues include C111, C115, and C118. S-adenosyl-L-methionine-binding positions include 164–165 (GE), S196, 218–220 (SLH), and N295. The active-site S-methylcysteine intermediate is the C338.

It belongs to the radical SAM superfamily. RlmN family. The cofactor is [4Fe-4S] cluster.

The protein resides in the cytoplasm. The enzyme catalyses adenosine(2503) in 23S rRNA + 2 reduced [2Fe-2S]-[ferredoxin] + 2 S-adenosyl-L-methionine = 2-methyladenosine(2503) in 23S rRNA + 5'-deoxyadenosine + L-methionine + 2 oxidized [2Fe-2S]-[ferredoxin] + S-adenosyl-L-homocysteine. It carries out the reaction adenosine(37) in tRNA + 2 reduced [2Fe-2S]-[ferredoxin] + 2 S-adenosyl-L-methionine = 2-methyladenosine(37) in tRNA + 5'-deoxyadenosine + L-methionine + 2 oxidized [2Fe-2S]-[ferredoxin] + S-adenosyl-L-homocysteine. Specifically methylates position 2 of adenine 2503 in 23S rRNA and position 2 of adenine 37 in tRNAs. m2A2503 modification seems to play a crucial role in the proofreading step occurring at the peptidyl transferase center and thus would serve to optimize ribosomal fidelity. The chain is Dual-specificity RNA methyltransferase RlmN from Neisseria meningitidis serogroup C / serotype 2a (strain ATCC 700532 / DSM 15464 / FAM18).